A 760-amino-acid chain; its full sequence is BMP/retinoic acid-inducible neural-specific protein 1 (760 aa).

The signal sequence occupies residues 1–16 (MNWRFVELLYFLFVWG). One can recognise an MACPF domain in the interval 68–251 (RYKIYREFAR…FVQSALSYIM (184 aa)). Residues Asn156, Asn433, Asn443, Asn553, Asn599, Asn630, and Asn676 are each glycosylated (N-linked (GlcNAc...) asparagine).

Belongs to the BRINP family. As to expression, expressed in brain. Expressed in GABAergic neurons of the pre-frontal cortex. Weakly expressed in embryonic stem (ES) cells and in ES-derived neural stem cells (NSCs).

The protein localises to the cytoplasm. Functionally, plays a role in neurogenesis, brain development, and the functioning of GABAergic neurons. May suppress cell cycle progression in postmitotic neurons by inhibiting G1/S transition. The protein is BMP/retinoic acid-inducible neural-specific protein 1 (Brinp1) of Mus musculus (Mouse).